Here is a 156-residue protein sequence, read N- to C-terminus: Small ribosomal subunit protein uS7 (156 aa).

The protein belongs to the universal ribosomal protein uS7 family. As to quaternary structure, part of the 30S ribosomal subunit. Contacts proteins S9 and S11.

Its function is as follows. One of the primary rRNA binding proteins, it binds directly to 16S rRNA where it nucleates assembly of the head domain of the 30S subunit. Is located at the subunit interface close to the decoding center, probably blocks exit of the E-site tRNA. The chain is Small ribosomal subunit protein uS7 from Syntrophus aciditrophicus (strain SB).